The chain runs to 860 residues: Probable beta-glucosidase A (860 aa).

An N-terminal signal peptide occupies residues 1-19; it reads MRFTSIEAVALTAVSLASA. 3 N-linked (GlcNAc...) asparagine glycosylation sites follow: asparagine 61, asparagine 211, and asparagine 252. Residue aspartate 280 is part of the active site. 11 N-linked (GlcNAc...) asparagine glycosylation sites follow: asparagine 315, asparagine 322, asparagine 354, asparagine 387, asparagine 442, asparagine 523, asparagine 542, asparagine 564, asparagine 658, asparagine 690, and asparagine 712.

This sequence belongs to the glycosyl hydrolase 3 family.

Its subcellular location is the secreted. It catalyses the reaction Hydrolysis of terminal, non-reducing beta-D-glucosyl residues with release of beta-D-glucose.. It participates in glycan metabolism; cellulose degradation. In terms of biological role, beta-glucosidases are one of a number of cellulolytic enzymes involved in the degradation of cellulosic biomass. Catalyzes the last step releasing glucose from the inhibitory cellobiose. This Aspergillus niger (strain ATCC MYA-4892 / CBS 513.88 / FGSC A1513) protein is Probable beta-glucosidase A (bglA).